The following is a 399-amino-acid chain: Argininosuccinate synthase (399 aa).

9–17 (AYSGGLDTS) contributes to the ATP binding site. Y85 contributes to the L-citrulline binding site. An ATP-binding site is contributed by G115. Residues T117, N121, and D122 each coordinate L-aspartate. N121 serves as a coordination point for L-citrulline. Residues R125, S173, E258, and Y270 each coordinate L-citrulline.

The protein belongs to the argininosuccinate synthase family. Type 1 subfamily. In terms of assembly, homotetramer.

The protein localises to the cytoplasm. The catalysed reaction is L-citrulline + L-aspartate + ATP = 2-(N(omega)-L-arginino)succinate + AMP + diphosphate + H(+). The protein operates within amino-acid biosynthesis; L-arginine biosynthesis; L-arginine from L-ornithine and carbamoyl phosphate: step 2/3. The polypeptide is Argininosuccinate synthase (Streptococcus gordonii (strain Challis / ATCC 35105 / BCRC 15272 / CH1 / DL1 / V288)).